The primary structure comprises 123 residues: Large ribosomal subunit protein uL14 (123 aa).

The protein belongs to the universal ribosomal protein uL14 family. In terms of assembly, part of the 50S ribosomal subunit. Forms a cluster with proteins L3 and L19. In the 70S ribosome, L14 and L19 interact and together make contacts with the 16S rRNA in bridges B5 and B8.

Binds to 23S rRNA. Forms part of two intersubunit bridges in the 70S ribosome. The sequence is that of Large ribosomal subunit protein uL14 from Tropheryma whipplei (strain TW08/27) (Whipple's bacillus).